Consider the following 595-residue polypeptide: 3-hydroxy-3-methylglutaryl-coenzyme A reductase 2 (595 aa).

The N-linked (GlcNAc...) asparagine glycan is linked to asparagine 35. The next 2 membrane-spanning stretches (helical) occupy residues 48-68 and 92-112; these read LPLY…MYFL and AIVS…IGFV. The interval 113 to 183 is linker; it reads QTFVSRGNND…SPLITPASSE (71 aa). N-linked (GlcNAc...) asparagine glycosylation occurs at asparagine 121. Positions 184–595 are catalytic; it reads EDEEIINSVV…KYNRSTKASS (412 aa). Catalysis depends on glutamate 278, which acts as the Charge relay system. The N-linked (GlcNAc...) asparagine glycan is linked to asparagine 342. Lysine 410 acts as the Charge relay system in catalysis. N-linked (GlcNAc...) asparagine glycosylation occurs at asparagine 455. The active-site Charge relay system is aspartate 486. Catalysis depends on histidine 584, which acts as the Proton donor. N-linked (GlcNAc...) asparagine glycosylation occurs at asparagine 588.

Belongs to the HMG-CoA reductase family. Expressed in young flowers and in mature sepals and ovaries.

Its subcellular location is the endoplasmic reticulum membrane. The enzyme catalyses (R)-mevalonate + 2 NADP(+) + CoA = (3S)-3-hydroxy-3-methylglutaryl-CoA + 2 NADPH + 2 H(+). The protein operates within metabolic intermediate biosynthesis; (R)-mevalonate biosynthesis; (R)-mevalonate from acetyl-CoA: step 3/3. Its function is as follows. Catalyzes the synthesis of mevalonate. The specific precursor of all isoprenoid compounds present in plants. The chain is 3-hydroxy-3-methylglutaryl-coenzyme A reductase 2 (HMG2) from Solanum tuberosum (Potato).